Reading from the N-terminus, the 505-residue chain is ATP synthase subunit alpha (505 aa).

171–178 (GDRQTGKT) is an ATP binding site.

It belongs to the ATPase alpha/beta chains family. F-type ATPases have 2 components, CF(1) - the catalytic core - and CF(0) - the membrane proton channel. CF(1) has five subunits: alpha(3), beta(3), gamma(1), delta(1), epsilon(1). CF(0) has three main subunits: a(1), b(2) and c(9-12). The alpha and beta chains form an alternating ring which encloses part of the gamma chain. CF(1) is attached to CF(0) by a central stalk formed by the gamma and epsilon chains, while a peripheral stalk is formed by the delta and b chains.

It is found in the cell inner membrane. The catalysed reaction is ATP + H2O + 4 H(+)(in) = ADP + phosphate + 5 H(+)(out). Its function is as follows. Produces ATP from ADP in the presence of a proton gradient across the membrane. The alpha chain is a regulatory subunit. In Campylobacter concisus (strain 13826), this protein is ATP synthase subunit alpha.